The chain runs to 249 residues: ATP synthase subunit a, chloroplastic (249 aa).

The next 5 membrane-spanning stretches (helical) occupy residues Gln-40–Val-60, Val-97–Leu-117, Ile-136–Ser-156, Leu-201–Leu-221, and Gly-222–Gly-242.

It belongs to the ATPase A chain family. As to quaternary structure, F-type ATPases have 2 components, CF(1) - the catalytic core - and CF(0) - the membrane proton channel. CF(1) has five subunits: alpha(3), beta(3), gamma(1), delta(1), epsilon(1). CF(0) has four main subunits: a, b, b' and c.

The protein resides in the plastid. It localises to the chloroplast thylakoid membrane. Its function is as follows. Key component of the proton channel; it plays a direct role in the translocation of protons across the membrane. The polypeptide is ATP synthase subunit a, chloroplastic (Manihot esculenta (Cassava)).